We begin with the raw amino-acid sequence, 201 residues long: Probable GTP-binding protein EngB (201 aa).

The EngB-type G domain occupies 22–195 (TQPEFAFAGK…WRCIEQFLEV (174 aa)). GTP contacts are provided by residues 30 to 37 (GKSNVGKS), 57 to 61 (GKTQT), 75 to 78 (DLPG), 142 to 145 (TKLD), and 174 to 176 (FSS). Residues Ser37 and Thr59 each coordinate Mg(2+).

Belongs to the TRAFAC class TrmE-Era-EngA-EngB-Septin-like GTPase superfamily. EngB GTPase family. Mg(2+) serves as cofactor.

In terms of biological role, necessary for normal cell division and for the maintenance of normal septation. The sequence is that of Probable GTP-binding protein EngB from Lachnoclostridium phytofermentans (strain ATCC 700394 / DSM 18823 / ISDg) (Clostridium phytofermentans).